A 1441-amino-acid polypeptide reads, in one-letter code: Probable ubiquitin-conjugating enzyme E2 R521 (1441 aa).

The helical transmembrane segment at 20 to 40 threads the bilayer; it reads YIHHIIINYITNSILYFFLIM. Residues 63-89 adopt a coiled-coil conformation; it reads NQSKLVNTLDIIKDEINKWEEKNTDKD. Residues 180 to 199 are compositionally biased toward basic and acidic residues; that stretch reads VSKDKMKDKSESNSEHEQES. Disordered regions lie at residues 180–207 and 283–305; these read VSKDKMKDKSESNSEHEQESKSVVSNEI and IFGKSKNSGPSSSKTSISSMSKV. The span at 286 to 303 shows a compositional bias: low complexity; sequence KSKNSGPSSSKTSISSMS. The stretch at 340–368 forms a coiled coil; it reads TTNEDNNDLDNLINEVERLVQETKDQETK. Over residues 505 to 538 the composition is skewed to low complexity; it reads TVEPVQEVAEEPVQQEVAEEPVQQEVAEEPVQQE. 2 disordered regions span residues 505–554 and 577–605; these read TVEP…PVQK and NDFSDHSDSPEPSDSSDSEEEITNSNNLG. A compositionally biased stretch (acidic residues) spans 539 to 549; it reads VAEEPVQEVAE. The 164-residue stretch at 1217 to 1380 folds into the UBC core domain; sequence AISRELLSHS…VRFNCMKWAM (164 aa). C1306 serves as the catalytic Glycyl thioester intermediate.

The protein belongs to the ubiquitin-conjugating enzyme family.

The protein localises to the membrane. It carries out the reaction S-ubiquitinyl-[E1 ubiquitin-activating enzyme]-L-cysteine + [E2 ubiquitin-conjugating enzyme]-L-cysteine = [E1 ubiquitin-activating enzyme]-L-cysteine + S-ubiquitinyl-[E2 ubiquitin-conjugating enzyme]-L-cysteine.. It functions in the pathway protein modification; protein ubiquitination. In terms of biological role, catalyzes the covalent attachment of ubiquitin to other proteins. The polypeptide is Probable ubiquitin-conjugating enzyme E2 R521 (Acanthamoeba polyphaga (Amoeba)).